A 454-amino-acid polypeptide reads, in one-letter code: Putative serine/threonine-protein phosphatase C27B7.6 (454 aa).

Mn(2+) is bound by residues aspartate 65, histidine 67, aspartate 93, and asparagine 125. Residue histidine 126 is the Proton donor of the active site. Mn(2+)-binding residues include histidine 174 and histidine 252. A disordered region spans residues 414–454 (RKKLGMTTSTTPPPPRTPSPDAPLAQSPPIPRSPPSSTENA). The segment covering 424 to 447 (TPPPPRTPSPDAPLAQSPPIPRSP) has biased composition (pro residues).

Belongs to the PPP phosphatase family. PP-1 subfamily. Mn(2+) serves as cofactor.

It catalyses the reaction O-phospho-L-seryl-[protein] + H2O = L-seryl-[protein] + phosphate. The enzyme catalyses O-phospho-L-threonyl-[protein] + H2O = L-threonyl-[protein] + phosphate. This chain is Putative serine/threonine-protein phosphatase C27B7.6, found in Caenorhabditis elegans.